The chain runs to 388 residues: Quinolone resistance protein NorA (388 aa).

12 helical membrane-spanning segments follow: residues 5 to 25 (IFVL…VIPV), 42 to 62 (LLVA…GTLA), 69 to 89 (LIIC…AVGH), 99 to 119 (VIGG…IADI), 129 to 149 (FGYM…IGGF), 157 to 177 (MPFY…IVLI), 201 to 221 (WKVF…LSAF), 239 to 259 (DISI…IYFF), 269 to 289 (LTFI…LVFA), 293 to 313 (WSIM…RPAI), 331 to 351 (LNST…GALF), and 355 to 375 (IEAP…IVLI).

It belongs to the major facilitator superfamily. TCR/Tet family.

The protein resides in the cell membrane. In terms of biological role, involved in quinolone resistance. May constitute a membrane-associated active efflux pump of hydrophilic quinolones. The protein is Quinolone resistance protein NorA (norA) of Staphylococcus aureus (strain COL).